The sequence spans 856 residues: V-type proton ATPase 116 kDa subunit a 2 (856 aa).

Over 1–393 (MGSLFRSETM…DAYGVGSYRE (393 aa)) the chain is Cytoplasmic. The chain crosses the membrane as a helical span at residues 394–412 (VNPALFTIITFPFLFAVMF). Topologically, residues 413-414 (GD) are vacuolar. The chain crosses the membrane as a helical span at residues 415-431 (FGHGFVMFLFALLLVLN). Topologically, residues 432-445 (ENHPRLNQSQEIMR) are cytoplasmic. The helical transmembrane segment at 446–475 (MFFNGRYILLLMGLFSVYTGLIYNDCFSKS) threads the bilayer. Residues 476-549 (VNLFGSGWNV…ATNRLTFLNS (74 aa)) lie on the Vacuolar side of the membrane. Residues N484 and N505 are each glycosylated (N-linked (GlcNAc...) asparagine). Residues 550–569 (FKMKMSVILGIIHMTFGVIL) traverse the membrane as a helical segment. Residues 570 to 587 (GIFNHLHFRKKFNIYLVS) are Cytoplasmic-facing. Residues 588–608 (IPELLFMLCIFGYLIFMIFYK) form a helical membrane-spanning segment. Residues 609 to 651 (WLVFSAETSRVAPSILIEFINMFLFPASKTSGLYTGQEYVQRV) are Vacuolar-facing. Residues 652-671 (LLVVTALSVPVLFLGKPLFL) form a helical membrane-spanning segment. The Cytoplasmic segment spans residues 672-739 (LWLHNGRSCF…EILMTQVIHS (68 aa)). Phosphoserine is present on residues S695 and S700. The helical transmembrane segment at 740 to 764 (IEYCLGCISNTASYLRLWALSLAHA) threads the bilayer. Over 765–785 (QLSDVLWAMLMRVGLRVDTTY) the chain is Vacuolar. A helical membrane pass occupies residues 786-824 (GVLLLLPVIALFAVLTIFILLIMEGLSAFLHAIRLHWVE). Over 825–856 (FQNKFYVGAGTKFVPFSFSLLSSKFNNDDSVA) the chain is Cytoplasmic.

It belongs to the V-ATPase 116 kDa subunit family. In terms of assembly, V-ATPase is a heteromultimeric enzyme made up of two complexes: the ATP-hydrolytic V1 complex and the proton translocation V0 complex. The V1 complex consists of three catalytic AB heterodimers that form a heterohexamer, three peripheral stalks each consisting of EG heterodimers, one central rotor including subunits D and F, and the regulatory subunits C and H. The proton translocation complex V0 consists of the proton transport subunit a, a ring of proteolipid subunits c9c'', rotary subunit d, subunits e and f, and the accessory subunits ATP6AP1/Ac45 and ATP6AP2/PRR. Directly interacts with PSCD2 through its N-terminal cytosolic tail in an intra-endosomal acidification-dependent manner. Disruption of this interaction results in the inhibition of endocytosis. Interacts with SPAAR.

The protein resides in the cell membrane. Its subcellular location is the endosome membrane. Its function is as follows. Subunit of the V0 complex of vacuolar(H+)-ATPase (V-ATPase), a multisubunit enzyme composed of a peripheral complex (V1) that hydrolyzes ATP and a membrane integral complex (V0) that translocates protons. V-ATPase is responsible for acidifying and maintaining the pH of intracellular compartments and in some cell types, is targeted to the plasma membrane, where it is responsible for acidifying the extracellular environment. Essential component of the endosomal pH-sensing machinery. May play a role in maintaining the Golgi functions, such as glycosylation maturation, by controlling the Golgi pH. In aerobic conditions, involved in intracellular iron homeostasis, thus triggering the activity of Fe(2+) prolyl hydroxylase (PHD) enzymes, and leading to HIF1A hydroxylation and subsequent proteasomal degradation. This is V-type proton ATPase 116 kDa subunit a 2 (ATP6V0A2) from Homo sapiens (Human).